We begin with the raw amino-acid sequence, 239 residues long: Ubiquinone biosynthesis O-methyltransferase (239 aa).

Residues Arg45, Gly64, Asp85, and Met129 each coordinate S-adenosyl-L-methionine.

The protein belongs to the methyltransferase superfamily. UbiG/COQ3 family.

The enzyme catalyses a 3-demethylubiquinol + S-adenosyl-L-methionine = a ubiquinol + S-adenosyl-L-homocysteine + H(+). It carries out the reaction a 3-(all-trans-polyprenyl)benzene-1,2-diol + S-adenosyl-L-methionine = a 2-methoxy-6-(all-trans-polyprenyl)phenol + S-adenosyl-L-homocysteine + H(+). The protein operates within cofactor biosynthesis; ubiquinone biosynthesis. Functionally, O-methyltransferase that catalyzes the 2 O-methylation steps in the ubiquinone biosynthetic pathway. This chain is Ubiquinone biosynthesis O-methyltransferase, found in Nitrosospira multiformis (strain ATCC 25196 / NCIMB 11849 / C 71).